We begin with the raw amino-acid sequence, 156 residues long: Small ribosomal subunit protein uS7 (156 aa).

Belongs to the universal ribosomal protein uS7 family. As to quaternary structure, part of the 30S ribosomal subunit. Contacts proteins S9 and S11.

Functionally, one of the primary rRNA binding proteins, it binds directly to 16S rRNA where it nucleates assembly of the head domain of the 30S subunit. Is located at the subunit interface close to the decoding center, probably blocks exit of the E-site tRNA. This Anaeromyxobacter dehalogenans (strain 2CP-1 / ATCC BAA-258) protein is Small ribosomal subunit protein uS7.